We begin with the raw amino-acid sequence, 256 residues long: Imidazole glycerol phosphate synthase subunit HisF (256 aa).

Residues D11 and D130 contribute to the active site.

It belongs to the HisA/HisF family. In terms of assembly, heterodimer of HisH and HisF.

The protein localises to the cytoplasm. The enzyme catalyses 5-[(5-phospho-1-deoxy-D-ribulos-1-ylimino)methylamino]-1-(5-phospho-beta-D-ribosyl)imidazole-4-carboxamide + L-glutamine = D-erythro-1-(imidazol-4-yl)glycerol 3-phosphate + 5-amino-1-(5-phospho-beta-D-ribosyl)imidazole-4-carboxamide + L-glutamate + H(+). The protein operates within amino-acid biosynthesis; L-histidine biosynthesis; L-histidine from 5-phospho-alpha-D-ribose 1-diphosphate: step 5/9. Functionally, IGPS catalyzes the conversion of PRFAR and glutamine to IGP, AICAR and glutamate. The HisF subunit catalyzes the cyclization activity that produces IGP and AICAR from PRFAR using the ammonia provided by the HisH subunit. The chain is Imidazole glycerol phosphate synthase subunit HisF (hisF) from Pasteurella multocida (strain Pm70).